The primary structure comprises 282 residues: Phosphate import ATP-binding protein PstB (282 aa).

Over residues 1-25 the composition is skewed to polar residues; that stretch reads MKALNANISTMSEVSRSATPQSDSP. The segment at 1-26 is disordered; that stretch reads MKALNANISTMSEVSRSATPQSDSPA. Residues 36-277 form the ABC transporter domain; that stretch reads IRIANFNAWY…PQEKRTDDYV (242 aa). Position 68–75 (68–75) interacts with ATP; it reads GPSGCGKS.

The protein belongs to the ABC transporter superfamily. Phosphate importer (TC 3.A.1.7) family. In terms of assembly, the complex is composed of two ATP-binding proteins (PstB), two transmembrane proteins (PstC and PstA) and a solute-binding protein (PstS).

It is found in the cell inner membrane. It catalyses the reaction phosphate(out) + ATP + H2O = ADP + 2 phosphate(in) + H(+). Part of the ABC transporter complex PstSACB involved in phosphate import. Responsible for energy coupling to the transport system. The protein is Phosphate import ATP-binding protein PstB of Rhodopirellula baltica (strain DSM 10527 / NCIMB 13988 / SH1).